We begin with the raw amino-acid sequence, 238 residues long: MLTHKQLELLDFIQKRMARDGVPPSFDEMKDALDLRSKSGIHRLITALEERGFIRRMAHRARALEIVKLPESMERAAEAERGLQTQPAFTPMLIAGSRTEPPRGALPVAAAALDIPMMGRIAAGVPIEAIAEVAHHVTVPGAMLSGRGEHYALEVKGDSMIQAGINDGDIVVIRSQPTAENGDIVVALVEDLEATLKRYYRRGGMIALEAANPAYETRLLREDQVKVQGRLVGLIRSY.

The segment at residues Phe26–Thr46 is a DNA-binding region (H-T-H motif). Catalysis depends on for autocatalytic cleavage activity residues Ser159 and Lys197.

It belongs to the peptidase S24 family. Homodimer.

It carries out the reaction Hydrolysis of Ala-|-Gly bond in repressor LexA.. Functionally, represses a number of genes involved in the response to DNA damage (SOS response), including recA and lexA. In the presence of single-stranded DNA, RecA interacts with LexA causing an autocatalytic cleavage which disrupts the DNA-binding part of LexA, leading to derepression of the SOS regulon and eventually DNA repair. The polypeptide is LexA repressor (Rhodobacter capsulatus (Rhodopseudomonas capsulata)).